The sequence spans 1157 residues: Myosin tail region-interacting protein MTI1 (1157 aa).

The SH3 domain maps to 5–69 (EVPFKVVAQF…PKSFVAVQGS (65 aa)). Disordered stretches follow at residues 68-116 (GSEV…GPVP) and 135-156 (TAVSAQVQHDSSSGNGERKVPM). The segment covering 77–89 (SSPNTGSTEQRTI) has biased composition (polar residues). A compositionally biased stretch (basic and acidic residues) spans 93–110 (VEQKDLPEPISPETKKET). S103 bears the Phosphoserine mark. Over residues 138–149 (SAQVQHDSSSGN) the composition is skewed to polar residues. Phosphoserine occurs at positions 158 and 166. Disordered stretches follow at residues 231 to 256 (PEPINRAQVESGRIETENDQLKKDLP) and 284 to 888 (KKAK…PKVA). Coiled coils occupy residues 234–301 (INRA…NKNE) and 356–430 (EKEQ…GASR). Composition is skewed to basic and acidic residues over residues 242–256 (GRIETENDQLKKDLP), 284–296 (KKAKLEQEHERSA), and 312–383 (NEKT…RGEN). Residues 398 to 411 (EGDNDEEKEEEDSE) show a composition bias toward acidic residues. Composition is skewed to basic and acidic residues over residues 412–423 (ENRRAALRERMA) and 506–524 (KTLDPHATTEHEQKQEHGT). Positions 544–558 (DSDEDTDDHEFEDAN) are enriched in acidic residues. S565 carries the post-translational modification Phosphoserine. Residues 574–585 (GNNESENVNSGE) are compositionally biased toward low complexity. Residues 597–606 (RTAEVSHDIE) show a composition bias toward basic and acidic residues. The span at 607–641 (NSSQNTTGNVLPVSSPQTRVARNGSINSLTKSISG) shows a compositional bias: polar residues. Phosphoserine is present on residues S621, S631, and S634. The residue at position 636 (T636) is a Phosphothreonine. Phosphoserine is present on residues S638 and S647. Over residues 642-653 (ENRRKSINEYHD) the composition is skewed to basic and acidic residues. Positions 654 to 668 (TVSTNSSALTETAQD) are enriched in polar residues. 2 stretches are compositionally biased toward pro residues: residues 691–738 (PHPV…PVSS) and 747–765 (SIPPVPPTPPAPPAPPAPL). Residues 769–778 (KHNEVEEHVK) are compositionally biased toward basic and acidic residues. Positions 795–808 (NTAPPLPRAPPVPP) are enriched in pro residues. Positions 832–853 (QNVTASTPSMMSTQQRVPTSVL) are enriched in polar residues. A Phosphothreonine modification is found at T850. S889 is modified (phosphoserine). Phosphothreonine occurs at positions 894 and 895. K1012 participates in a covalent cross-link: Glycyl lysine isopeptide (Lys-Gly) (interchain with G-Cter in ubiquitin).

Binds to the SH3 domains of the type I myosins MYO3 and MYO5.

Its subcellular location is the cytoplasm. The protein localises to the cytoskeleton. The protein resides in the actin patch. Its function is as follows. Involved in the regulation of actin cytoskeleton. This is Myosin tail region-interacting protein MTI1 (BBC1) from Saccharomyces cerevisiae (strain ATCC 204508 / S288c) (Baker's yeast).